We begin with the raw amino-acid sequence, 240 residues long: MQDKDFFSWRRTMLLRFQRMETAEEVYHEIELQAQQLEYDYYSLCVRHPVPFTRPKVAFYTNYPEAWVSYYQAKNFLAIDPVLNPENFSQGHLMWNDDLFSEAQPLWEAARAHGLRRGVTQYLMLPNRALGFLSFSRCSAREIPILSDELQLKMQLLVRESLMALMRLNDEIVMTPEMNFSKREKEILRWTAEGKTSAEIAMILSISENTVNFHQKNMQKKINAPNKTQVACYAAATGLI.

The 66-residue stretch at 173–238 folds into the HTH luxR-type domain; that stretch reads VMTPEMNFSK…QVACYAAATG (66 aa). Positions 197–216 form a DNA-binding region, H-T-H motif; the sequence is SAEIAMILSISENTVNFHQK.

Its function is as follows. Activates cell division by specifically increasing transcription from one of the two promoters that lie immediately upstream of the ftsQAZ gene cluster. Activates ydiV expression in response to extracellular autoinducer AI-1 (Vibrio fischeri autoinducer oxoC6). The chain is Regulatory protein SdiA (sdiA) from Escherichia coli (strain K12).